The primary structure comprises 145 residues: Transcriptional regulator MraZ (145 aa).

SpoVT-AbrB domains lie at 7-54 (NATN…GPDL) and 83-126 (GVFM…QPQA).

It belongs to the MraZ family. As to quaternary structure, forms oligomers.

It localises to the cytoplasm. Its subcellular location is the nucleoid. The sequence is that of Transcriptional regulator MraZ from Rhizobium leguminosarum bv. trifolii (strain WSM2304).